A 105-amino-acid chain; its full sequence is ATP synthase subunit c (105 aa).

Transmembrane regions (helical) follow at residues 3-23 (FLSL…GGMG), 32-52 (SILG…IGMG), and 78-98 (VAMA…IIAI).

The protein belongs to the ATPase C chain family. In terms of assembly, F-type ATPases have 2 components, F(1) - the catalytic core - and F(0) - the membrane proton channel. F(1) has five subunits: alpha(3), beta(3), gamma(1), delta(1), epsilon(1). F(0) has three main subunits: a(1), b(2) and c(10-14). The alpha and beta chains form an alternating ring which encloses part of the gamma chain. F(1) is attached to F(0) by a central stalk formed by the gamma and epsilon chains, while a peripheral stalk is formed by the delta and b chains.

Its subcellular location is the cell inner membrane. Functionally, f(1)F(0) ATP synthase produces ATP from ADP in the presence of a proton or sodium gradient. F-type ATPases consist of two structural domains, F(1) containing the extramembraneous catalytic core and F(0) containing the membrane proton channel, linked together by a central stalk and a peripheral stalk. During catalysis, ATP synthesis in the catalytic domain of F(1) is coupled via a rotary mechanism of the central stalk subunits to proton translocation. In terms of biological role, key component of the F(0) channel; it plays a direct role in translocation across the membrane. A homomeric c-ring of between 10-14 subunits forms the central stalk rotor element with the F(1) delta and epsilon subunits. This is ATP synthase subunit c from Helicobacter pylori (strain Shi470).